A 373-amino-acid chain; its full sequence is P2Y purinoceptor 1 (373 aa).

At 1–51 the chain is on the extracellular side; the sequence is MTEVPWSVVPNGTDAAFLAGLGSLWGNSTVASTAAVSSSFQCALTKTGFQF. Asn11 and Asn27 each carry an N-linked (GlcNAc...) asparagine glycan. 2 disulfides stabilise this stretch: Cys42–Cys296 and Cys124–Cys202. Lys46 lines the ADP pocket. A helical membrane pass occupies residues 52–74; that stretch reads YYLPAVYILVFIIGFLGNSVAIW. The Cytoplasmic portion of the chain corresponds to 75–87; the sequence is MFVFHMKPWSGIS. A helical transmembrane segment spans residues 88-109; it reads VYMFNLALADFLYVLTLPALIF. Residues 110 to 125 lie on the Extracellular side of the membrane; that stretch reads YYFNKTDWIFGDAMCK. Residue Asn113 is glycosylated (N-linked (GlcNAc...) asparagine). The helical transmembrane segment at 126-147 threads the bilayer; the sequence is LQRFIFHVNLYGSILFLTCISA. Topologically, residues 148–166 are cytoplasmic; it reads HRYSGVVYPLKSLGRLKKK. Residues 167–188 traverse the membrane as a helical segment; that stretch reads NAIYVSVLVWLIVVVAISPILF. The Extracellular segment spans residues 189–214; the sequence is YSGTGTRKNKTVTCYDTTSNDYLRSY. A glycan (N-linked (GlcNAc...) asparagine) is linked at Asn197. 203–205 lines the ADP pocket; sequence YDT. Residues 215–237 form a helical membrane-spanning segment; it reads FIYSMCTTVAMFCIPLVLILGCY. Topologically, residues 238–260 are cytoplasmic; the sequence is GLIVKALIYNDLDNSPLRRKSIY. The chain crosses the membrane as a helical span at residues 261-284; that stretch reads LVIIVLTVFAVSYIPFHVMKTMNL. ADP contacts are provided by residues 283–287, 303–306, and Arg310; these read NLRAR and YATY. Topologically, residues 285 to 303 are extracellular; that stretch reads RARLDFQTPEMCDFNDRVY. The chain crosses the membrane as a helical span at residues 304-325; the sequence is ATYQVTRGLASLNSCVDPILYF. Residues 326 to 373 lie on the Cytoplasmic side of the membrane; sequence LAGDTFRRRLSRATRKASRRSEANLQSKSEEMTLNILSEFKQNGDTSL.

This sequence belongs to the G-protein coupled receptor 1 family.

It is found in the cell membrane. In terms of biological role, receptor for extracellular adenine nucleotides such as ADP. In platelets, binding to ADP leads to mobilization of intracellular calcium ions via activation of phospholipase C, a change in platelet shape, and ultimately platelet aggregation. In Mus musculus (Mouse), this protein is P2Y purinoceptor 1 (P2ry1).